A 241-amino-acid chain; its full sequence is Ribonuclease PH (241 aa).

Residues arginine 89 and 127–129 (GTR) contribute to the phosphate site.

This sequence belongs to the RNase PH family. As to quaternary structure, homohexameric ring arranged as a trimer of dimers.

The enzyme catalyses tRNA(n+1) + phosphate = tRNA(n) + a ribonucleoside 5'-diphosphate. Functionally, phosphorolytic 3'-5' exoribonuclease that plays an important role in tRNA 3'-end maturation. Removes nucleotide residues following the 3'-CCA terminus of tRNAs; can also add nucleotides to the ends of RNA molecules by using nucleoside diphosphates as substrates, but this may not be physiologically important. Probably plays a role in initiation of 16S rRNA degradation (leading to ribosome degradation) during starvation. This chain is Ribonuclease PH, found in Xanthomonas axonopodis pv. citri (strain 306).